A 204-amino-acid chain; its full sequence is CASP-like protein 3A1 (204 aa).

The Cytoplasmic portion of the chain corresponds to 1-39 (MGSIGNGRNGSEVGIQIPAMGNKEVLERPAIPRWPRLGV). The helical transmembrane segment at 40–60 (VMVATRAVALVMAVLSMALMI) threads the bilayer. At 61–88 (SAKQRGSLKIFGIEIPLYANWSFSDSLE) the chain is on the extracellular side. N-linked (GlcNAc...) asparagine glycosylation occurs at Asn80. A helical membrane pass occupies residues 89–109 (YLVGMSAVSAAYCLAQLLLTA). The Cytoplasmic segment spans residues 110–124 (HKAVKNAPVVQSRNY). The helical transmembrane segment at 125-145 (AWLLFTGDQIFAYAMMSAGSA) threads the bilayer. The Extracellular segment spans residues 146–179 (AAAVANLNRTGIRHTALPNFCKPLPRFCDLSAAS). Asn153 is a glycosylation site (N-linked (GlcNAc...) asparagine). Residues 180 to 200 (IACAFLSCIFLAASAVIDVIW) traverse the membrane as a helical segment. The Cytoplasmic portion of the chain corresponds to 201–204 (LSNM).

The protein belongs to the Casparian strip membrane proteins (CASP) family. In terms of assembly, homodimer and heterodimers.

The protein resides in the cell membrane. This Oryza sativa subsp. indica (Rice) protein is CASP-like protein 3A1.